The chain runs to 450 residues: 3-phosphoshikimate 1-carboxyvinyltransferase (450 aa).

The interval 1 to 25 (MSAHGDPKPMTARKGGALTGTAEVP) is disordered. Lysine 28, serine 29, and arginine 33 together coordinate 3-phosphoshikimate. Lysine 28 lines the phosphoenolpyruvate pocket. Phosphoenolpyruvate-binding residues include glycine 101 and arginine 129. Serine 174, glutamine 176, aspartate 327, and lysine 354 together coordinate 3-phosphoshikimate. Glutamine 176 contributes to the phosphoenolpyruvate binding site. The active-site Proton acceptor is the aspartate 327. Positions 358 and 403 each coordinate phosphoenolpyruvate.

It belongs to the EPSP synthase family. As to quaternary structure, monomer.

It is found in the cytoplasm. The catalysed reaction is 3-phosphoshikimate + phosphoenolpyruvate = 5-O-(1-carboxyvinyl)-3-phosphoshikimate + phosphate. Its pathway is metabolic intermediate biosynthesis; chorismate biosynthesis; chorismate from D-erythrose 4-phosphate and phosphoenolpyruvate: step 6/7. Catalyzes the transfer of the enolpyruvyl moiety of phosphoenolpyruvate (PEP) to the 5-hydroxyl of shikimate-3-phosphate (S3P) to produce enolpyruvyl shikimate-3-phosphate and inorganic phosphate. The protein is 3-phosphoshikimate 1-carboxyvinyltransferase of Jannaschia sp. (strain CCS1).